A 602-amino-acid chain; its full sequence is Toxin YwqJ (602 aa).

The LXG domain maps to 1–235 (MSKVFESKSL…TTYIDAKTQQ (235 aa)). 2 coiled-coil regions span residues 6–41 (ESKSLIEEAKSRKKQYETLEEQLNTLKKAFQGVADL) and 227–251 (TYIDAKTQQAEARRLQEKAEEEANK).

The protein in the N-terminal section; belongs to the LXG family. In terms of assembly, probably interacts with cognate immunity protein YwqK but not with non-cognate immunity proteins. The interaction inhibits the toxic activity of YwqJ.

The protein localises to the secreted. Its function is as follows. Toxic component of one of 6 LXG toxin-immunity modules in this strain. They promote kin selection, mediate competition in biofilms, and drive spatial segregation of different strains, indicating that LXG toxins may help avoid warfare between strains in biofilms. Mediates intercellular competition during biofilm formation; disruption of the operon disadvantages the bacteria, but overexpression of the cognate immunity protein restores growth in competition with wild-type. Overexpression alone in situ causes growth arrest but not cell lysis; no effect is seen on DNA or rRNA. Co-overexpression with cognate immunity protein YwqK does not cause growth arrest. The toxic effect is dependent on the epsA and tapA operons which are required for biofilm formation. Its toxic effects are probably neutralized by its cognate immunity protein YwqK, but not by immunity proteins specific to other toxins with the LXG domain. May have deaminase activity. This Bacillus subtilis (strain 168) protein is Toxin YwqJ (ywqJ).